The chain runs to 148 residues: DNA-directed RNA polymerase II subunit GRINL1A, isoforms 4/5 (148 aa).

The tract at residues 1 to 66 (MATPARAPES…AEFGGAAGNV (66 aa)) is disordered. Over residues 53 to 66 (GLGAAEFGGAAGNV) the composition is skewed to low complexity.

The polypeptide is DNA-directed RNA polymerase II subunit GRINL1A, isoforms 4/5 (POLR2M) (Homo sapiens (Human)).